Consider the following 445-residue polypeptide: Exodeoxyribonuclease 7 large subunit (445 aa).

This sequence belongs to the XseA family. As to quaternary structure, heterooligomer composed of large and small subunits.

Its subcellular location is the cytoplasm. The enzyme catalyses Exonucleolytic cleavage in either 5'- to 3'- or 3'- to 5'-direction to yield nucleoside 5'-phosphates.. Its function is as follows. Bidirectionally degrades single-stranded DNA into large acid-insoluble oligonucleotides, which are then degraded further into small acid-soluble oligonucleotides. The sequence is that of Exodeoxyribonuclease 7 large subunit from Staphylococcus haemolyticus (strain JCSC1435).